Reading from the N-terminus, the 374-residue chain is Quinolinate synthase (374 aa).

2 residues coordinate iminosuccinate: His-53 and Ser-70. A [4Fe-4S] cluster-binding site is contributed by Cys-116. Residues 148–150 and Ser-169 contribute to the iminosuccinate site; that span reads YMN. Cys-236 is a [4Fe-4S] cluster binding site. Iminosuccinate-binding positions include 262-264 and Thr-279; that span reads HPE. Cys-327 is a [4Fe-4S] cluster binding site.

The protein belongs to the quinolinate synthase family. Type 3 subfamily. Requires [4Fe-4S] cluster as cofactor.

The protein resides in the cytoplasm. It catalyses the reaction iminosuccinate + dihydroxyacetone phosphate = quinolinate + phosphate + 2 H2O + H(+). It participates in cofactor biosynthesis; NAD(+) biosynthesis; quinolinate from iminoaspartate: step 1/1. In terms of biological role, catalyzes the condensation of iminoaspartate with dihydroxyacetone phosphate to form quinolinate. This chain is Quinolinate synthase, found in Halobacterium salinarum (strain ATCC 29341 / DSM 671 / R1).